Reading from the N-terminus, the 337-residue chain is Vegetative-specific protein H5 (337 aa).

Positions 88–90 (HGG) match the Involved in the stabilization of the negatively charged intermediate by the formation of the oxyanion hole motif. Active-site residues include serine 161, aspartate 261, and histidine 291.

Belongs to the 'GDXG' lipolytic enzyme family.

The chain is Vegetative-specific protein H5 (cinB) from Dictyostelium discoideum (Social amoeba).